The sequence spans 554 residues: MAIQHPDIQPAVNHSVQVAIAGAGPVGLMMANYLGQMGIDVLVVEKLDKLIDYPRAIGIDDEALRTMQSVGLVENVLPHTTPWHAMRFLTPKGRCFADIQPMTDEFGWPRRNAFIQPQVDAVMLEGLSRFPNVRCLFSRELEAFSQQDDEVTLHLKTAEGQRETIKAQWLVACDGGASFVRRTLNVPFEGKTAPNQWIVVDIANDPLSTPHIYLCCDPVRPYVSAALPHAVRRFEFMVMPGETEEQLREPQNMRKLLSKVLPNPDNVELIRQRVYTHNARLAQRFRIDRVLLAGDAAHIMPVWQGQGYNSGMRDAFNLAWKLALVIQGKARDALLDTYQQERRDHAKAMIDLSVTAGNVLAPPKRWQGTLRDGVSWLLNYLPPVKRYFLEMRFKPMPQYYGGALVREGEAKHSPVGKMFIQPKVTLENGDVTLLDNAIGANFAVIGWGCNPLWGMSDEQIQQWRALGTRFIQVVPEVQIHTAQDNHDGVLHVGDTQGRLRSWFAQHNASLVVMRPDRFVAATAIPQTLGNTLNKLASVMTLTRPDADVSVEKVA.

Residues 17 to 46 (QVAIAGAGPVGLMMANYLGQMGIDVLVVEK) and 285 to 295 (FRIDRVLLAGD) contribute to the FAD site.

It belongs to the PheA/TfdB FAD monooxygenase family. Requires FAD as cofactor.

The enzyme catalyses 3-(3-hydroxyphenyl)propanoate + NADH + O2 + H(+) = 3-(2,3-dihydroxyphenyl)propanoate + NAD(+) + H2O. It carries out the reaction (2E)-3-(3-hydroxyphenyl)prop-2-enoate + NADH + O2 + H(+) = (2E)-3-(2,3-dihydroxyphenyl)prop-2-enoate + NAD(+) + H2O. Its pathway is aromatic compound metabolism; 3-phenylpropanoate degradation. Functionally, catalyzes the insertion of one atom of molecular oxygen into position 2 of the phenyl ring of 3-(3-hydroxyphenyl)propionate (3-HPP) and hydroxycinnamic acid (3HCI). The protein is 3-(3-hydroxy-phenyl)propionate/3-hydroxycinnamic acid hydroxylase of Shigella sonnei (strain Ss046).